Reading from the N-terminus, the 338-residue chain is Holliday junction branch migration complex subunit RuvB (338 aa).

Residues 1-181 (MERAITPEKR…FGVISRLEFY (181 aa)) are large ATPase domain (RuvB-L). Residues Leu20, Arg21, Gly62, Lys65, Thr66, Thr67, 128 to 130 (EDF), Arg171, Tyr181, and Arg218 contribute to the ATP site. Residue Thr66 participates in Mg(2+) binding. Residues 182–252 (THDELAFIVT…VVQETLRLLE (71 aa)) are small ATPAse domain (RuvB-S). Residues 255–338 (EMGFDQMDRM…TPERPQGSLF (84 aa)) are head domain (RuvB-H). Residues Arg310 and Arg315 each contribute to the DNA site.

The protein belongs to the RuvB family. As to quaternary structure, homohexamer. Forms an RuvA(8)-RuvB(12)-Holliday junction (HJ) complex. HJ DNA is sandwiched between 2 RuvA tetramers; dsDNA enters through RuvA and exits via RuvB. An RuvB hexamer assembles on each DNA strand where it exits the tetramer. Each RuvB hexamer is contacted by two RuvA subunits (via domain III) on 2 adjacent RuvB subunits; this complex drives branch migration. In the full resolvosome a probable DNA-RuvA(4)-RuvB(12)-RuvC(2) complex forms which resolves the HJ.

Its subcellular location is the cytoplasm. The enzyme catalyses ATP + H2O = ADP + phosphate + H(+). In terms of biological role, the RuvA-RuvB-RuvC complex processes Holliday junction (HJ) DNA during genetic recombination and DNA repair, while the RuvA-RuvB complex plays an important role in the rescue of blocked DNA replication forks via replication fork reversal (RFR). RuvA specifically binds to HJ cruciform DNA, conferring on it an open structure. The RuvB hexamer acts as an ATP-dependent pump, pulling dsDNA into and through the RuvAB complex. RuvB forms 2 homohexamers on either side of HJ DNA bound by 1 or 2 RuvA tetramers; 4 subunits per hexamer contact DNA at a time. Coordinated motions by a converter formed by DNA-disengaged RuvB subunits stimulates ATP hydrolysis and nucleotide exchange. Immobilization of the converter enables RuvB to convert the ATP-contained energy into a lever motion, pulling 2 nucleotides of DNA out of the RuvA tetramer per ATP hydrolyzed, thus driving DNA branch migration. The RuvB motors rotate together with the DNA substrate, which together with the progressing nucleotide cycle form the mechanistic basis for DNA recombination by continuous HJ branch migration. Branch migration allows RuvC to scan DNA until it finds its consensus sequence, where it cleaves and resolves cruciform DNA. The sequence is that of Holliday junction branch migration complex subunit RuvB from Trichlorobacter lovleyi (strain ATCC BAA-1151 / DSM 17278 / SZ) (Geobacter lovleyi).